The primary structure comprises 84 residues: U-actitoxin-Avd8e (84 aa).

Residues 1 to 22 form the signal peptide; that stretch reads MASARTLVLLLIGAVLMCQVSA. The propeptide occupies 23–41; the sequence is DSELLNEILAAHMEEDMPE. The region spanning 44 to 84 is the ShKT domain; the sequence is CIDRYRSNICGSVIRPLDCTRRKSRMGRFARTNCKKLCGFC. Disulfide bonds link Cys-44/Cys-84, Cys-53/Cys-77, and Cys-62/Cys-81.

The protein belongs to the sea anemone 8 toxin family.

Its subcellular location is the secreted. It localises to the nematocyst. The sequence is that of U-actitoxin-Avd8e from Anemonia viridis (Snakelocks anemone).